Consider the following 318-residue polypeptide: Transaldolase (318 aa).

The Schiff-base intermediate with substrate role is filled by Lys132.

This sequence belongs to the transaldolase family. Type 1 subfamily. As to quaternary structure, homodimer.

Its subcellular location is the cytoplasm. It catalyses the reaction D-sedoheptulose 7-phosphate + D-glyceraldehyde 3-phosphate = D-erythrose 4-phosphate + beta-D-fructose 6-phosphate. Its pathway is carbohydrate degradation; pentose phosphate pathway; D-glyceraldehyde 3-phosphate and beta-D-fructose 6-phosphate from D-ribose 5-phosphate and D-xylulose 5-phosphate (non-oxidative stage): step 2/3. Functionally, transaldolase is important for the balance of metabolites in the pentose-phosphate pathway. This is Transaldolase from Allorhizobium ampelinum (strain ATCC BAA-846 / DSM 112012 / S4) (Agrobacterium vitis (strain S4)).